The sequence spans 259 residues: 3-deoxy-manno-octulosonate cytidylyltransferase 1 (259 aa).

The protein belongs to the KdsB family.

Its subcellular location is the cytoplasm. The enzyme catalyses 3-deoxy-alpha-D-manno-oct-2-ulosonate + CTP = CMP-3-deoxy-beta-D-manno-octulosonate + diphosphate. It functions in the pathway nucleotide-sugar biosynthesis; CMP-3-deoxy-D-manno-octulosonate biosynthesis; CMP-3-deoxy-D-manno-octulosonate from 3-deoxy-D-manno-octulosonate and CTP: step 1/1. It participates in bacterial outer membrane biogenesis; lipopolysaccharide biosynthesis. Activates KDO (a required 8-carbon sugar) for incorporation into bacterial lipopolysaccharide in Gram-negative bacteria. The sequence is that of 3-deoxy-manno-octulosonate cytidylyltransferase 1 from Hydrogenovibrio crunogenus (strain DSM 25203 / XCL-2) (Thiomicrospira crunogena).